Reading from the N-terminus, the 490-residue chain is GTPase Der (490 aa).

EngA-type G domains follow at residues 3-166 (PVVA…MEDL) and 203-376 (IKLA…DSST). Residues 9-16 (GRPNVGKS), 56-60 (DTGGI), 118-121 (NKTD), 209-216 (GRPNVGKS), 256-260 (DTAGV), and 321-324 (NKWD) each bind GTP. The KH-like domain maps to 377-461 (RRVGTSMLTR…PIRIQFKEGE (85 aa)).

Belongs to the TRAFAC class TrmE-Era-EngA-EngB-Septin-like GTPase superfamily. EngA (Der) GTPase family. In terms of assembly, associates with the 50S ribosomal subunit.

In terms of biological role, GTPase that plays an essential role in the late steps of ribosome biogenesis. The sequence is that of GTPase Der from Escherichia coli O7:K1 (strain IAI39 / ExPEC).